Reading from the N-terminus, the 373-residue chain is ATP phosphoribosyltransferase regulatory subunit (373 aa).

This sequence belongs to the class-II aminoacyl-tRNA synthetase family. HisZ subfamily. In terms of assembly, heteromultimer composed of HisG and HisZ subunits.

Its subcellular location is the cytoplasm. It participates in amino-acid biosynthesis; L-histidine biosynthesis; L-histidine from 5-phospho-alpha-D-ribose 1-diphosphate: step 1/9. In terms of biological role, required for the first step of histidine biosynthesis. May allow the feedback regulation of ATP phosphoribosyltransferase activity by histidine. This is ATP phosphoribosyltransferase regulatory subunit from Rhizobium johnstonii (strain DSM 114642 / LMG 32736 / 3841) (Rhizobium leguminosarum bv. viciae).